The sequence spans 828 residues: Outer membrane usher protein MrkC (828 aa).

The first 18 residues, 1 to 18 (MKQRSICPGRLSTAIAVA), serve as a signal peptide directing secretion. A disulfide bridge connects residues Cys-813 and Cys-827.

It belongs to the fimbrial export usher family.

It localises to the cell outer membrane. Involved in the export and assembly of the type 3 fimbrial subunit (MrkA). This chain is Outer membrane usher protein MrkC (mrkC), found in Klebsiella pneumoniae.